A 41-amino-acid chain; its full sequence is Large ribosomal subunit protein bL36 (41 aa).

This sequence belongs to the bacterial ribosomal protein bL36 family.

The sequence is that of Large ribosomal subunit protein bL36 from Gluconobacter oxydans (strain 621H) (Gluconobacter suboxydans).